Consider the following 551-residue polypeptide: Probable glucomannan 4-beta-mannosyltransferase 3 (551 aa).

Residues 60–80 (ACLALSAMLLADAVLMAAACF) form a helical membrane-spanning segment. Residue Asp154 is part of the active site. Residues Asp213 and Asp215 each contribute to the substrate site. Asp307 is a catalytic residue. 4 helical membrane passes run 386-406 (VVAH…SVLI), 409-429 (VTVP…LHAI), 504-524 (ILFS…GGDY), and 525-545 (YFVY…GFCG).

Belongs to the glycosyltransferase 2 family. Plant cellulose synthase-like A subfamily.

The protein resides in the golgi apparatus membrane. It catalyses the reaction GDP-mannose + (glucomannan)n = GDP + (glucomannan)n+1.. Its function is as follows. Probable mannan synthase which consists of a 4-beta-mannosyltransferase activity on mannan using GDP-mannose. The beta-1,4-mannan product is the backbone for galactomannan synthesis by galactomannan galactosyltransferase. Galactomannan is a noncellulosic polysaccharides of plant cell wall. The chain is Probable glucomannan 4-beta-mannosyltransferase 3 from Oryza sativa subsp. japonica (Rice).